The primary structure comprises 89 residues: Transcription elongation factor 1 homolog (89 aa).

Zn(2+) is bound by residues Cys-25, Cys-28, Cys-49, and Cys-52.

It belongs to the ELOF1 family.

Its subcellular location is the nucleus. Its function is as follows. Transcription elongation factor implicated in the maintenance of proper chromatin structure in actively transcribed regions. This chain is Transcription elongation factor 1 homolog, found in Oryza sativa subsp. japonica (Rice).